A 361-amino-acid chain; its full sequence is Chorismate synthase (361 aa).

Positions 48 and 54 each coordinate NADP(+). FMN contacts are provided by residues 125 to 127, 238 to 239, Gly278, 293 to 297, and Arg319; these read RSS, NA, and KPTSS.

Belongs to the chorismate synthase family. In terms of assembly, homotetramer. It depends on FMNH2 as a cofactor.

The enzyme catalyses 5-O-(1-carboxyvinyl)-3-phosphoshikimate = chorismate + phosphate. Its pathway is metabolic intermediate biosynthesis; chorismate biosynthesis; chorismate from D-erythrose 4-phosphate and phosphoenolpyruvate: step 7/7. Functionally, catalyzes the anti-1,4-elimination of the C-3 phosphate and the C-6 proR hydrogen from 5-enolpyruvylshikimate-3-phosphate (EPSP) to yield chorismate, which is the branch point compound that serves as the starting substrate for the three terminal pathways of aromatic amino acid biosynthesis. This reaction introduces a second double bond into the aromatic ring system. The protein is Chorismate synthase of Vibrio campbellii (strain ATCC BAA-1116).